A 93-amino-acid polypeptide reads, in one-letter code: Small ribosomal subunit protein uS19 (93 aa).

This sequence belongs to the universal ribosomal protein uS19 family.

Its function is as follows. Protein S19 forms a complex with S13 that binds strongly to the 16S ribosomal RNA. The protein is Small ribosomal subunit protein uS19 of Dehalococcoides mccartyi (strain ATCC BAA-2100 / JCM 16839 / KCTC 5957 / BAV1).